A 526-amino-acid chain; its full sequence is Keratin, type I cytoskeletal 10 (526 aa).

Residues 1 to 15 show a composition bias toward low complexity; it reads MSVRYSSSKQYSSSR. A disordered region spans residues 1–29; it reads MSVRYSSSKQYSSSRSGGGGGGGSSLRIS. Positions 1-126 are head; the sequence is MSVRYSSSKQ…FGDGGLISGN (126 aa). 6 positions are modified to phosphoserine: S14, S16, S34, S45, S48, and S151. The tract at residues 127–162 is coil 1A; the sequence is QKITMQNLNDRLASYLDKVRALEESNYELEVKIKEW. Positions 127-441 constitute an IF rod domain; it reads QKITMQNLND…SLLEGEGSSG (315 aa). Residues 163-183 form a linker 1 region; that stretch reads YEKYGNSRQREPRDYSKYYQT. Residues 184–275 are coil 1B; that stretch reads IDDLKNQIFN…KNHEEEMRDL (92 aa). Residues 276–298 are linker 12; the sequence is QNVSTGDVNVEMNAAPGVDLTEL. Residues 299-437 are coil 2; it reads LNNMRSQYEQ…QTYRSLLEGE (139 aa). Residues 438–526 form a tail region; sequence GSSGGGSYGG…GESSSKGPRY (89 aa). The segment covering 458–505 has biased composition (gly residues); sequence GGGGYGGGSSSGGYGGGSSSGGGHGGSSGGSYGGGSSSGGGHGGGSSS. Positions 458-526 are disordered; it reads GGGGYGGGSS…GESSSKGPRY (69 aa). Positions 506-526 are enriched in low complexity; sequence GGHKSTTTGSVGESSSKGPRY.

It belongs to the intermediate filament family. As to quaternary structure, heterotetramer of two type I and two type II keratins. Heterodimer with KRT1. Two heterodimers of KRT1 and KRT10 form a heterotetramer. The KRT10 subunit in the heterotetramer is probably disulfide-linked.

It is found in the secreted. Its subcellular location is the extracellular space. The protein localises to the cell surface. The protein resides in the cytoplasm. Functionally, plays a role in the establishment of the epidermal barrier on plantar skin. Involved in the maintenance of cell layer development and keratin filament bundles in suprabasal cells of the epithelium. The chain is Keratin, type I cytoskeletal 10 (KRT10) from Bos taurus (Bovine).